We begin with the raw amino-acid sequence, 119 residues long: Large ribosomal subunit protein P3z (119 aa).

Over residues 79–90 (AGGAASSGGGAG) the composition is skewed to gly residues. The tract at residues 79–119 (AGGAASSGGGAGEAAAAPKEDEKKKEESEEEEGDFGFDLFG) is disordered. Residues 96–105 (PKEDEKKKEE) show a composition bias toward basic and acidic residues.

It belongs to the eukaryotic ribosomal protein P1/P2 family. Post-translationally, phosphorylated.

Its function is as follows. Plays an important role in the elongation step of protein synthesis. This Arabidopsis thaliana (Mouse-ear cress) protein is Large ribosomal subunit protein P3z (RPP3A).